Reading from the N-terminus, the 341-residue chain is MRVIFSEDHKLRNAKTELYGGELVPPFEAPFRAEWILAAVKEAGFDDVVAPARHGLETVLKVHDAGYLNFLETAWDRWKAAGYKGEAIATSFPVRRTSPRIPTDIEGQIGYYCNAAETAISPGTWEAALSSMASAIDGADLIAAGHKAAFSLCRPPGHHAGIDMFGGYCFINNAAVAAQRLLDKGAKKIAILDVDFHHGNGTQDIFYERGDVFFASLHGDPAEAFPHFLGYAEETGKGAGAGTTANYPMGRGTPYSVWGEALTDSLKRIAAFGAEAIVVSLGVDTFEQDPISFFKLTSPDYITMGRTIAASGVPLLVVMEGGYGVPEIGLNVANVLKGVAG.

Substrate contacts are provided by tyrosine 19, glutamate 106, and glutamate 117. Histidine 159 acts as the Proton donor/acceptor in catalysis. Positions 195, 197, and 284 each coordinate Zn(2+). Tyrosine 323 is a binding site for substrate.

It belongs to the histone deacetylase family. In terms of assembly, homodimer. Zn(2+) serves as cofactor.

It catalyses the reaction N-acetylputrescine + H2O = putrescine + acetate. The enzyme catalyses N-acetylcadaverine + H2O = cadaverine + acetate. The catalysed reaction is N(1)-acetylspermine + H2O = spermine + acetate. It carries out the reaction N(1)-acetylspermidine + H2O = spermidine + acetate. It catalyses the reaction N(8)-acetylspermidine + H2O = spermidine + acetate. It functions in the pathway amine and polyamine metabolism. Its activity is regulated as follows. Zinc ions inhibit enzyme activity in a dose-dependent manner. Inhibited by KCl at concentrations above 10 mM. Inhibited by o-oxyquinoline in vitro, suggesting that it is a metalloprotein. Inhibited by various substrate N(8)-acetylspermidine analogs bearing different metal-binding groups such as trifluoromethylketone, thiol, or hydroxamate, and by hydroxamate analogs of short-chain acetyldiamines. Involved in polyamine metabolism. Catalyzes the deacetylation of various acetylated polyamines such as N-acetylputrescine, N-acetylcadaverine, N(1)-acetylspermine, N(1)-acetylspermidine and N(8)-acetylspermidine. In vitro, is also able to deacetylate L-Lys(epsilon-acetyl)coumarin, but has very low activity towards the larger tetrapeptide N-acetyl-L-Arg-L-His-L-Lys(epsilon-acetyl)-L-Lys(epsilon-acetyl)coumarin. This chain is Acetylpolyamine amidohydrolase, found in Mycoplana ramosa (Mycoplana bullata).